A 378-amino-acid polypeptide reads, in one-letter code: Squalene methyltransferase 1 (378 aa).

The chain crosses the membrane as a helical span at residues 17 to 37; it reads LLTWKGVAGLVVAITLGYLII.

It belongs to the class I-like SAM-binding methyltransferase superfamily. Erg6/SMT family.

The protein localises to the microsome membrane. The enzyme catalyses squalene + 2 S-adenosyl-L-methionine = 3,22-dimethyl-1,2,23,24-tetradehydro-2,3,22,23-tetrahydrosqualene + 2 S-adenosyl-L-homocysteine + 2 H(+). In terms of biological role, converts squalene to mono- and dimethyl derivatives, but not to tri- and tetramethylated products. Unable to methylate cycloartenol, zymosterol or lanosterol. Methylates both C-3 and C22 positions, but only C-3 position in monomethylated products. Produces mainly dimethylated squalene. This Botryococcus braunii (Green alga) protein is Squalene methyltransferase 1 (TMT-1).